We begin with the raw amino-acid sequence, 334 residues long: Holliday junction branch migration complex subunit RuvB (334 aa).

Positions 1–180 (MSEFLTPERT…FGIILELDFY (180 aa)) are large ATPase domain (RuvB-L). ATP is bound by residues Leu19, Arg20, Gly61, Lys64, Thr65, Thr66, 127-129 (EDF), Arg170, Tyr180, and Arg217. Mg(2+) is bound at residue Thr65. Residues 181 to 251 (TVKELKEIIK…IVLKTMEVLN (71 aa)) form a small ATPAse domain (RuvB-S) region. The segment at 254–334 (AEGLDEFDRK…KYEVPENRLF (81 aa)) is head domain (RuvB-H). 2 residues coordinate DNA: Arg309 and Arg314.

The protein belongs to the RuvB family. As to quaternary structure, homohexamer. Forms an RuvA(8)-RuvB(12)-Holliday junction (HJ) complex. HJ DNA is sandwiched between 2 RuvA tetramers; dsDNA enters through RuvA and exits via RuvB. An RuvB hexamer assembles on each DNA strand where it exits the tetramer. Each RuvB hexamer is contacted by two RuvA subunits (via domain III) on 2 adjacent RuvB subunits; this complex drives branch migration. In the full resolvosome a probable DNA-RuvA(4)-RuvB(12)-RuvC(2) complex forms which resolves the HJ.

The protein resides in the cytoplasm. It catalyses the reaction ATP + H2O = ADP + phosphate + H(+). In terms of biological role, the RuvA-RuvB-RuvC complex processes Holliday junction (HJ) DNA during genetic recombination and DNA repair, while the RuvA-RuvB complex plays an important role in the rescue of blocked DNA replication forks via replication fork reversal (RFR). RuvA specifically binds to HJ cruciform DNA, conferring on it an open structure. The RuvB hexamer acts as an ATP-dependent pump, pulling dsDNA into and through the RuvAB complex. RuvB forms 2 homohexamers on either side of HJ DNA bound by 1 or 2 RuvA tetramers; 4 subunits per hexamer contact DNA at a time. Coordinated motions by a converter formed by DNA-disengaged RuvB subunits stimulates ATP hydrolysis and nucleotide exchange. Immobilization of the converter enables RuvB to convert the ATP-contained energy into a lever motion, pulling 2 nucleotides of DNA out of the RuvA tetramer per ATP hydrolyzed, thus driving DNA branch migration. The RuvB motors rotate together with the DNA substrate, which together with the progressing nucleotide cycle form the mechanistic basis for DNA recombination by continuous HJ branch migration. Branch migration allows RuvC to scan DNA until it finds its consensus sequence, where it cleaves and resolves cruciform DNA. The protein is Holliday junction branch migration complex subunit RuvB of Thermotoga petrophila (strain ATCC BAA-488 / DSM 13995 / JCM 10881 / RKU-1).